A 597-amino-acid polypeptide reads, in one-letter code: FERM domain-containing protein 3 (597 aa).

Residues 32 to 312 (MRCTIRLLDD…ENQAFYKYAK (281 aa)) enclose the FERM domain. The tract at residues 409–435 (SAPLISSSPVKAAQEYEDPPSEEEDKI) is disordered. The span at 423-432 (EYEDPPSEEE) shows a compositional bias: acidic residues. A helical membrane pass occupies residues 531–551 (LLVVGLGLLLFVFPLLLLLLE).

It localises to the membrane. Putative tumor suppressor gene that may be implicated in the origin and progression of lung cancer. The protein is FERM domain-containing protein 3 (FRMD3) of Pongo abelii (Sumatran orangutan).